The following is a 1379-amino-acid chain: DNA-directed RNA polymerase subunit beta (1379 aa).

It belongs to the RNA polymerase beta chain family. The RNAP catalytic core consists of 2 alpha, 1 beta, 1 beta' and 1 omega subunit. When a sigma factor is associated with the core the holoenzyme is formed, which can initiate transcription.

The enzyme catalyses RNA(n) + a ribonucleoside 5'-triphosphate = RNA(n+1) + diphosphate. In terms of biological role, DNA-dependent RNA polymerase catalyzes the transcription of DNA into RNA using the four ribonucleoside triphosphates as substrates. This chain is DNA-directed RNA polymerase subunit beta, found in Chelativorans sp. (strain BNC1).